We begin with the raw amino-acid sequence, 221 residues long: Peptide methionine sulfoxide reductase MsrA (221 aa).

The active site involves cysteine 54.

Belongs to the MsrA Met sulfoxide reductase family.

It carries out the reaction L-methionyl-[protein] + [thioredoxin]-disulfide + H2O = L-methionyl-(S)-S-oxide-[protein] + [thioredoxin]-dithiol. It catalyses the reaction [thioredoxin]-disulfide + L-methionine + H2O = L-methionine (S)-S-oxide + [thioredoxin]-dithiol. Functionally, has an important function as a repair enzyme for proteins that have been inactivated by oxidation. Catalyzes the reversible oxidation-reduction of methionine sulfoxide in proteins to methionine. In Methylobacterium sp. (strain 4-46), this protein is Peptide methionine sulfoxide reductase MsrA.